Reading from the N-terminus, the 229-residue chain is Guanylate kinase (229 aa).

One can recognise an RPE1 insert domain in the interval 7–42 (RVLQKCAYREEFKGDMERSTAATSKLPLEVELSRNS). The 179-residue stretch at 44–222 (GLIIILSSPS…TLKKIHAIIV (179 aa)) folds into the Guanylate kinase-like domain. Residue 51–58 (SPSGTGKS) participates in ATP binding.

Belongs to the guanylate kinase family.

The protein resides in the cytoplasm. The catalysed reaction is GMP + ATP = GDP + ADP. Functionally, essential for recycling GMP and indirectly, cGMP. The polypeptide is Guanylate kinase (gmk) (Rickettsia conorii (strain ATCC VR-613 / Malish 7)).